The sequence spans 539 residues: 4-hydroxybenzoate--CoA/benzoate--CoA ligase (539 aa).

The protein belongs to the ATP-dependent AMP-binding enzyme family. Benzoate-CoA ligase subfamily. Homodimer. Post-translationally, the N-terminus is blocked.

It catalyses the reaction 4-hydroxybenzoate + ATP + CoA = 4-hydroxybenzoyl-CoA + AMP + diphosphate. The enzyme catalyses benzoate + ATP + CoA = benzoyl-CoA + AMP + diphosphate. Catalyzes the ligation of 4-hydroxybenzoate, benzoate or cyclohex-1,4-dienecarboxylate and CoA at the expense of ATP. The enzyme shows low activity towards cyclo-2,5-dienecarboxylate, 4-fluorobenzoate, 4-chlorobenzoate and 2-methoxybenzoate. The protein is 4-hydroxybenzoate--CoA/benzoate--CoA ligase (hbaA) of Rhodopseudomonas palustris (strain ATCC BAA-98 / CGA009).